Reading from the N-terminus, the 1470-residue chain is Gag-Pol polyprotein (1470 aa).

Residue Gly-2 is the site of N-myristoyl glycine; by host attachment. The short motif at 16-22 (FEHIRLR) is the Nuclear export signal element. Residues 26 to 32 (KKKYQIK) carry the Nuclear localization signal motif. Residues 117 to 144 (AVTPPGGQQKNNTGGTATPGGSQNFPAQ) are disordered. Residues 122 to 144 (GGQQKNNTGGTATPGGSQNFPAQ) are compositionally biased toward polar residues. CCHC-type zinc fingers lie at residues 398–415 (PKCYNCGKFGHMQRQCPE) and 419–436 (IKCLKCGKPGHLAKDCRG). The segment at 479-504 (KEAPAAVCRERETNEKSEQKPPSEQS) is disordered. The span at 486-504 (CRERETNEKSEQKPPSEQS) shows a compositional bias: basic and acidic residues. The Peptidase A2 domain maps to 531-602 (VKALLDTGAD…TPINIIGRNF (72 aa)). Residue Asp-536 is the For protease activity; shared with dimeric partner of the active site. Residues 658–848 (EGKLSRVGGD…PPFEWMGYKL (191 aa)) enclose the Reverse transcriptase domain. Mg(2+) contacts are provided by Asp-724, Asp-799, and Asp-800. The segment at 841–849 (FEWMGYKLW) is RT 'primer grip'. Residues 1011-1027 (WEQWWADYWQVSWIPEW) carry the Tryptophan repeat motif motif. Residues 1047-1170 (IPGEDVYYVD…IDKLVSKGVR (124 aa)) enclose the RNase H type-1 domain. Mg(2+) is bound by residues Asp-1056, Glu-1091, Asp-1111, and Asp-1162. The Integrase-type zinc finger occupies 1176 to 1217 (GRIEEAQEEHDRYHSNWRNLADTFGLPQIVAKEIVAMCPKCQ). His-1185, His-1189, Cys-1213, and Cys-1216 together coordinate Zn(2+). The region spanning 1227-1377 (VDASPGVWQM…TAAERLINMI (151 aa)) is the Integrase catalytic domain. Residues Asp-1237 and Asp-1289 each contribute to the Mg(2+) site. Positions 1396–1443 (FRVYYREGRDPVWKGPARLIWKGEGAVVLKEGEELKVVPRRKAKIIKD) form a DNA-binding region, integrase-type. Residues 1451–1470 (GDETHLEGAGGSDHQMAGDS) are disordered.

As to quaternary structure, homotrimer. Interacts with gp41 (via C-terminus). In terms of assembly, homodimer. The active site consists of two apposed aspartic acid residues. Heterodimer of p66 RT and p51 RT (RT p66/p51). Heterodimerization of RT is essential for DNA polymerase activity. Despite the sequence identities, p66 RT and p51 RT have distinct folding. As to quaternary structure, homotetramer; may further associate as a homohexadecamer. The cofactor is Mg(2+). In terms of processing, specific enzymatic cleavages by the viral protease yield mature proteins. The protease is released by autocatalytic cleavage. The polyprotein is cleaved during and after budding, this process is termed maturation. Proteolytic cleavage of p66 RT removes the RNase H domain to yield the p51 RT subunit. Capsid protein p24 is phosphorylated.

It localises to the virion. Its subcellular location is the host nucleus. It is found in the host cytoplasm. The protein resides in the host cell membrane. It catalyses the reaction Specific for a P1 residue that is hydrophobic, and P1' variable, but often Pro.. The catalysed reaction is Endohydrolysis of RNA in RNA/DNA hybrids. Three different cleavage modes: 1. sequence-specific internal cleavage of RNA. Human immunodeficiency virus type 1 and Moloney murine leukemia virus enzymes prefer to cleave the RNA strand one nucleotide away from the RNA-DNA junction. 2. RNA 5'-end directed cleavage 13-19 nucleotides from the RNA end. 3. DNA 3'-end directed cleavage 15-20 nucleotides away from the primer terminus.. It carries out the reaction 3'-end directed exonucleolytic cleavage of viral RNA-DNA hybrid.. The enzyme catalyses DNA(n) + a 2'-deoxyribonucleoside 5'-triphosphate = DNA(n+1) + diphosphate. Its activity is regulated as follows. The viral protease is inhibited by many synthetic protease inhibitors (PIs), such as amprenavir, atazanavir, indinavir, loprinavir, nelfinavir, ritonavir and saquinavir. RT can be inhibited either by nucleoside RT inhibitors (NRTIs) or by non nucleoside RT inhibitors (NNRTIs). NRTIs act as chain terminators, whereas NNRTIs inhibit DNA polymerization by binding a small hydrophobic pocket near the RT active site and inducing an allosteric change in this region. Classical NRTIs are abacavir, adefovir (PMEA), didanosine (ddI), lamivudine (3TC), stavudine (d4T), tenofovir (PMPA), zalcitabine (ddC), and zidovudine (AZT). Classical NNRTIs are atevirdine (BHAP U-87201E), delavirdine, efavirenz (DMP-266), emivirine (I-EBU), and nevirapine (BI-RG-587). The tritherapies used as a basic effective treatment of AIDS associate two NRTIs and one NNRTI. Use of protease inhibitors in tritherapy regimens permit more ambitious therapeutic strategies. Functionally, gag-Pol polyprotein and Gag polyprotein may regulate their own translation, by the binding genomic RNA in the 5'-UTR. At low concentration, Gag-Pol and Gag would promote translation, whereas at high concentration, the polyproteins encapsidate genomic RNA and then shut off translation. Matrix protein p17 has two main functions: in infected cell, it targets Gag and Gag-pol polyproteins to the plasma membrane via a multipartite membrane-binding signal, that includes its myristointegration complex. The myristoylation signal and the NLS exert conflicting influences its subcellular localization. The key regulation of these motifs might be phosphorylation of a portion of MA molecules on the C-terminal tyrosine at the time of virus maturation, by virion-associated cellular tyrosine kinase. Implicated in the release from host cell mediated by Vpu. Its function is as follows. Capsid protein p24 forms the conical core that encapsulates the genomic RNA-nucleocapsid complex in the virion. The core is constituted by capsid protein hexamer subunits. The core is disassembled soon after virion entry. Interaction with host PPIA/CYPA protects the virus from restriction by host TRIM5-alpha and from an unknown antiviral activity in host cells. This capsid restriction by TRIM5 is one of the factors which restricts SIV to the simian species. In terms of biological role, nucleocapsid protein p7 encapsulates and protects viral dimeric unspliced (genomic) RNA. Binds these RNAs through its zinc fingers. Facilitates rearangement of nucleic acid secondary structure during retrotranscription of genomic RNA. This capability is referred to as nucleic acid chaperone activity. Functionally, the aspartyl protease mediates proteolytic cleavages of Gag and Gag-Pol polyproteins during or shortly after the release of the virion from the plasma membrane. Cleavages take place as an ordered, step-wise cascade to yield mature proteins. This process is called maturation. Displays maximal activity during the budding process just prior to particle release from the cell. Also cleaves Nef and Vif, probably concomitantly with viral structural proteins on maturation of virus particles. Hydrolyzes host EIF4GI and PABP1 in order to shut off the capped cellular mRNA translation. The resulting inhibition of cellular protein synthesis serves to ensure maximal viral gene expression and to evade host immune response. Reverse transcriptase/ribonuclease H (RT) is a multifunctional enzyme that converts the viral dimeric RNA genome into dsDNA in the cytoplasm, shortly after virus entry into the cell. This enzyme displays a DNA polymerase activity that can copy either DNA or RNA templates, and a ribonuclease H (RNase H) activity that cleaves the RNA strand of RNA-DNA heteroduplexes in a partially processive 3' to 5' endonucleasic mode. Conversion of viral genomic RNA into dsDNA requires many steps. A tRNA binds to the primer-binding site (PBS) situated at the 5'-end of the viral RNA. RT uses the 3' end of the tRNA primer to perform a short round of RNA-dependent minus-strand DNA synthesis. The reading proceeds through the U5 region and ends after the repeated (R) region which is present at both ends of viral RNA. The portion of the RNA-DNA heteroduplex is digested by the RNase H, resulting in a ssDNA product attached to the tRNA primer. This ssDNA/tRNA hybridizes with the identical R region situated at the 3' end of viral RNA. This template exchange, known as minus-strand DNA strong stop transfer, can be either intra- or intermolecular. RT uses the 3' end of this newly synthesized short ssDNA to perform the RNA-dependent minus-strand DNA synthesis of the whole template. RNase H digests the RNA template except for two polypurine tracts (PPTs) situated at the 5'-end and near the center of the genome. It is not clear if both polymerase and RNase H activities are simultaneous. RNase H can probably proceed both in a polymerase-dependent (RNA cut into small fragments by the same RT performing DNA synthesis) and a polymerase-independent mode (cleavage of remaining RNA fragments by free RTs). Secondly, RT performs DNA-directed plus-strand DNA synthesis using the PPTs that have not been removed by RNase H as primers. PPTs and tRNA primers are then removed by RNase H. The 3' and 5' ssDNA PBS regions hybridize to form a circular dsDNA intermediate. Strand displacement synthesis by RT to the PBS and PPT ends produces a blunt ended, linear dsDNA copy of the viral genome that includes long terminal repeats (LTRs) at both ends. Its function is as follows. Integrase catalyzes viral DNA integration into the host chromosome, by performing a series of DNA cutting and joining reactions. This enzyme activity takes place after virion entry into a cell and reverse transcription of the RNA genome in dsDNA. The first step in the integration process is 3' processing. This step requires a complex comprising the viral genome, matrix protein, Vpr and integrase. This complex is called the pre-integration complex (PIC). The integrase protein removes 2 nucleotides from each 3' end of the viral DNA, leaving recessed CA OH's at the 3' ends. In the second step, the PIC enters cell nucleus. This process is mediated through integrase and Vpr proteins, and allows the virus to infect a non dividing cell. This ability to enter the nucleus is specific of lentiviruses, other retroviruses cannot and rely on cell division to access cell chromosomes. In the third step, termed strand transfer, the integrase protein joins the previously processed 3' ends to the 5' ends of strands of target cellular DNA at the site of integration. The 5'-ends are produced by integrase-catalyzed staggered cuts, 5 bp apart. A Y-shaped, gapped, recombination intermediate results, with the 5'-ends of the viral DNA strands and the 3' ends of target DNA strands remaining unjoined, flanking a gap of 5 bp. The last step is viral DNA integration into host chromosome. This involves host DNA repair synthesis in which the 5 bp gaps between the unjoined strands are filled in and then ligated. Since this process occurs at both cuts flanking the SIV genome, a 5 bp duplication of host DNA is produced at the ends of SIV integration. Alternatively, Integrase may catalyze the excision of viral DNA just after strand transfer, this is termed disintegration. The chain is Gag-Pol polyprotein (gag-pol) from Cercopithecidae (Old World monkeys).